Here is a 182-residue protein sequence, read N- to C-terminus: MGRYSREPDVASKTCKARGSNLRVHFKNTRETAMAIKKMSLRRAQAFLKNVTDHKECVPFRRFNGGVGRCSQAKQWGTTQGRWPKKSAEFLLQMLRNAESNADYSGLDVDRLVIEHIQVNRAPCLRRRTYRAHGRINPYMSSPCHIEMWLTEAESGVDGAKQGKKKKKTDGVEKATTKRQKQ.

Residues 155–182 are disordered; it reads SGVDGAKQGKKKKKTDGVEKATTKRQKQ.

Belongs to the universal ribosomal protein uL22 family.

The polypeptide is Large ribosomal subunit protein uL22 (RpL17) (Carabus granulatus (Ground beetle)).